Here is a 199-residue protein sequence, read N- to C-terminus: Protein Thf1 (199 aa).

Residues 167-198 (QYSRVEKDISMYKSNIEKMKQALEIIALNLKT) are a coiled coil.

The protein belongs to the THF1 family.

May be involved in photosynthetic membrane biogenesis. In Prochlorococcus marinus (strain NATL1A), this protein is Protein Thf1.